We begin with the raw amino-acid sequence, 95 residues long: Small ribosomal subunit protein bS18 (95 aa).

It belongs to the bacterial ribosomal protein bS18 family. In terms of assembly, part of the 30S ribosomal subunit. Forms a tight heterodimer with protein bS6.

Binds as a heterodimer with protein bS6 to the central domain of the 16S rRNA, where it helps stabilize the platform of the 30S subunit. The sequence is that of Small ribosomal subunit protein bS18 from Ehrlichia ruminantium (strain Gardel).